The chain runs to 421 residues: MTDAEIENSPASDLKELNLENEGVEQQDQAKADESDPVESKKKKNKKKKKKKSNVKKIELLFPDGKYPEGAWMDYHQDFNLQRTTDEESRYLKRDLERAEHWNDVRKGAEIHRRVRRAIKDRIVPGMKLMDIADMIENTTRKYTGAENLLAMEDPKSQGIGFPTGLSLNHCAAHFTPNAGDKTVLKYEDVMKVDYGVQVNGNIIDSAFTVSFDPQYDNLLAAVKDATYTGIKEAGIDVRLTDIGEAIQEVMESYEVEINGETYQVKPCRNLCGHSIAPYRIHGGKSVPIVKNGDTTKMEEGEHFAIETFGSTGRGYVTAGGEVSHYARSAEDHQVMPTLDSAKNLLKTIDRNFGTLPFCRRYLDRLGQEKYLFALNNLVRHGLVQDYPPLNDIPGSYTAQFEHTILLHAHKKEVVSKGDDY.

Positions 1-53 (MTDAEIENSPASDLKELNLENEGVEQQDQAKADESDPVESKKKKNKKKKKKKS) are disordered. The segment covering 28–40 (DQAKADESDPVES) has biased composition (basic and acidic residues). A Phosphoserine modification is found at Ser35. Positions 41-53 (KKKKNKKKKKKKS) are enriched in basic residues. His174 provides a ligand contact to substrate. A divalent metal cation-binding residues include Asp194, Asp205, and His274. His282 contacts substrate. A divalent metal cation is bound by residues Glu307 and Glu402.

The protein belongs to the peptidase M24A family. Methionine aminopeptidase eukaryotic type 2 subfamily. It depends on Co(2+) as a cofactor. Zn(2+) serves as cofactor. The cofactor is Mn(2+). Requires Fe(2+) as cofactor.

It is found in the cytoplasm. The catalysed reaction is Release of N-terminal amino acids, preferentially methionine, from peptides and arylamides.. Its function is as follows. Cotranslationally removes the N-terminal methionine from nascent proteins. The N-terminal methionine is often cleaved when the second residue in the primary sequence is small and uncharged (Met-Ala-, Cys, Gly, Pro, Ser, Thr, or Val). In Saccharomyces cerevisiae (strain RM11-1a) (Baker's yeast), this protein is Methionine aminopeptidase 2.